A 261-amino-acid chain; its full sequence is Small ribosomal subunit protein eS1 (261 aa).

Positions 1-18 (MAVGKNKRISKGKKGGKK) are enriched in basic residues. The segment at 1–21 (MAVGKNKRISKGKKGGKKKAT) is disordered.

It belongs to the eukaryotic ribosomal protein eS1 family. Component of the small ribosomal subunit. Mature ribosomes consist of a small (40S) and a large (60S) subunit. The 40S subunit contains about 33 different proteins and 1 molecule of RNA (18S). The 60S subunit contains about 49 different proteins and 3 molecules of RNA (25S, 5.8S and 5S).

It is found in the cytoplasm. The chain is Small ribosomal subunit protein eS1 (cyc07) from Daucus carota (Wild carrot).